We begin with the raw amino-acid sequence, 309 residues long: Glutaminase (309 aa).

7 residues coordinate substrate: Ser64, Asn114, Glu160, Asn167, Tyr191, Tyr243, and Val261.

The protein belongs to the glutaminase family. Homotetramer.

It carries out the reaction L-glutamine + H2O = L-glutamate + NH4(+). The polypeptide is Glutaminase (Rhizobium etli (strain CIAT 652)).